Consider the following 59-residue polypeptide: UPF0434 protein lpg1920 (59 aa).

The protein belongs to the UPF0434 family.

In Legionella pneumophila subsp. pneumophila (strain Philadelphia 1 / ATCC 33152 / DSM 7513), this protein is UPF0434 protein lpg1920.